We begin with the raw amino-acid sequence, 558 residues long: Glucose-6-phosphate isomerase (558 aa).

The active-site Proton donor is Glu362. Catalysis depends on residues His393 and Lys523.

This sequence belongs to the GPI family.

It is found in the cytoplasm. It catalyses the reaction alpha-D-glucose 6-phosphate = beta-D-fructose 6-phosphate. The protein operates within carbohydrate degradation; glycolysis; D-glyceraldehyde 3-phosphate and glycerone phosphate from D-glucose: step 2/4. This chain is Glucose-6-phosphate isomerase (Pgi), found in Drosophila simulans (Fruit fly).